Here is a 231-residue protein sequence, read N- to C-terminus: PIAGSMVLAAILLKLGGYGIIRMVQILPTTKTDLFIPFIVLALWGATLANLTCLQQTDLKSLIAYSSISHMGLVVAAVIIQSPWGLSGAMALMIAHGFTSSALFCLANTTYERTHTRILILTRGFHNILPMATTWWLLTNLMNIATPPTMNFTSELLIVSTLFNWCPTTIIMLGLSMLITTTYSLHMFLSTQMGSPMLNYQTEPSHSREHLLMILHIIPLLMISMKPELVI.

7 consecutive transmembrane segments (helical) span residues 1–21 (PIAGSMVLAAILLKLGGYGII), 34–54 (LFIPFIVLALWGATLANLTCL), 61–80 (SLIAYSSISHMGLVVAAVII), 84–106 (WGLSGAMALMIAHGFTSSALFCL), 118–138 (ILILTRGFHNILPMATTWWLL), 156–176 (LLIVSTLFNWCPTTIIMLGLS), and 211–231 (LLMILHIIPLLMISMKPELVI).

Belongs to the complex I subunit 4 family.

It is found in the mitochondrion membrane. The catalysed reaction is a ubiquinone + NADH + 5 H(+)(in) = a ubiquinol + NAD(+) + 4 H(+)(out). Its function is as follows. Core subunit of the mitochondrial membrane respiratory chain NADH dehydrogenase (Complex I) that is believed to belong to the minimal assembly required for catalysis. Complex I functions in the transfer of electrons from NADH to the respiratory chain. The immediate electron acceptor for the enzyme is believed to be ubiquinone. The polypeptide is NADH-ubiquinone oxidoreductase chain 4 (MT-ND4) (Hypnale hypnale (Merrem's hump-nosed viper)).